A 286-amino-acid chain; its full sequence is UDP-3-O-acyl-N-acetylglucosamine deacetylase (286 aa).

3 residues coordinate Zn(2+): His-79, His-237, and Asp-241. His-264 serves as the catalytic Proton donor.

The protein belongs to the LpxC family. The cofactor is Zn(2+).

The enzyme catalyses a UDP-3-O-[(3R)-3-hydroxyacyl]-N-acetyl-alpha-D-glucosamine + H2O = a UDP-3-O-[(3R)-3-hydroxyacyl]-alpha-D-glucosamine + acetate. Its pathway is glycolipid biosynthesis; lipid IV(A) biosynthesis; lipid IV(A) from (3R)-3-hydroxytetradecanoyl-[acyl-carrier-protein] and UDP-N-acetyl-alpha-D-glucosamine: step 2/6. Its function is as follows. Catalyzes the hydrolysis of UDP-3-O-myristoyl-N-acetylglucosamine to form UDP-3-O-myristoylglucosamine and acetate, the committed step in lipid A biosynthesis. This Brucella melitensis biotype 2 (strain ATCC 23457) protein is UDP-3-O-acyl-N-acetylglucosamine deacetylase.